Reading from the N-terminus, the 117-residue chain is PBP1-interacting protein XAC1 (117 aa).

Residues 1 to 60 (MSKAPSQPAKKWMSARTLAKSEDATNRKSNTAAPASQPSQQPASVMHERPTPPPPAPVQL) are disordered. The span at 32-44 (AAPASQPSQQPAS) shows a compositional bias: low complexity.

Forms a complex composed of at least MKT1, PBP1, XAC1 and LSM12. Forms a complex composed of at least MKT1L, PBP1, XAC1 and LSM12.

The protein resides in the cytoplasm. Functionally, involved in post-transcriptional regulation of gene expression. The protein is PBP1-interacting protein XAC1 of Trypanosoma brucei brucei (strain 927/4 GUTat10.1).